A 488-amino-acid chain; its full sequence is Glutamyl-tRNA(Gln) amidotransferase subunit A (488 aa).

Active-site charge relay system residues include Lys-76 and Ser-151. Catalysis depends on Ser-175, which acts as the Acyl-ester intermediate.

The protein belongs to the amidase family. GatA subfamily. Heterotrimer of A, B and C subunits.

The catalysed reaction is L-glutamyl-tRNA(Gln) + L-glutamine + ATP + H2O = L-glutaminyl-tRNA(Gln) + L-glutamate + ADP + phosphate + H(+). In terms of biological role, allows the formation of correctly charged Gln-tRNA(Gln) through the transamidation of misacylated Glu-tRNA(Gln) in organisms which lack glutaminyl-tRNA synthetase. The reaction takes place in the presence of glutamine and ATP through an activated gamma-phospho-Glu-tRNA(Gln). This Symbiobacterium thermophilum (strain DSM 24528 / JCM 14929 / IAM 14863 / T) protein is Glutamyl-tRNA(Gln) amidotransferase subunit A.